Consider the following 490-residue polypeptide: tRNA-2-methylthio-N(6)-dimethylallyladenosine synthase (490 aa).

One can recognise an MTTase N-terminal domain in the interval 37–154; that stretch reads KKVYIATQGC…LPELYDKSTT (118 aa). C46, C83, C117, C198, C202, and C205 together coordinate [4Fe-4S] cluster. The 233-residue stretch at 184–416 folds into the Radical SAM core domain; that stretch reads KVEGYRAFVS…QKVIRDSTLK (233 aa). Positions 419–487 constitute a TRAM domain; sequence EEMVGKTLRV…PHMVRGELVD (69 aa).

Belongs to the methylthiotransferase family. MiaB subfamily. As to quaternary structure, monomer. [4Fe-4S] cluster is required as a cofactor.

It is found in the cytoplasm. The enzyme catalyses N(6)-dimethylallyladenosine(37) in tRNA + (sulfur carrier)-SH + AH2 + 2 S-adenosyl-L-methionine = 2-methylsulfanyl-N(6)-dimethylallyladenosine(37) in tRNA + (sulfur carrier)-H + 5'-deoxyadenosine + L-methionine + A + S-adenosyl-L-homocysteine + 2 H(+). Functionally, catalyzes the methylthiolation of N6-(dimethylallyl)adenosine (i(6)A), leading to the formation of 2-methylthio-N6-(dimethylallyl)adenosine (ms(2)i(6)A) at position 37 in tRNAs that read codons beginning with uridine. This Psychrobacter sp. (strain PRwf-1) protein is tRNA-2-methylthio-N(6)-dimethylallyladenosine synthase.